A 176-amino-acid polypeptide reads, in one-letter code: Inorganic pyrophosphatase (176 aa).

The substrate site is built by Lys31, Arg45, and Tyr57. Mg(2+)-binding residues include Asp67, Asp72, and Asp104. Tyr141 lines the substrate pocket.

It belongs to the PPase family. In terms of assembly, homohexamer. The cofactor is Mg(2+).

Its subcellular location is the cytoplasm. It carries out the reaction diphosphate + H2O = 2 phosphate + H(+). Functionally, catalyzes the hydrolysis of inorganic pyrophosphate (PPi) forming two phosphate ions. This Methanopyrus kandleri (strain AV19 / DSM 6324 / JCM 9639 / NBRC 100938) protein is Inorganic pyrophosphatase.